The following is a 364-amino-acid chain: Mannitol-1-phosphate 5-dehydrogenase (364 aa).

An NAD(+)-binding site is contributed by 6 to 17 (VLHFGAGNIGRG).

The protein belongs to the mannitol dehydrogenase family.

It catalyses the reaction D-mannitol 1-phosphate + NAD(+) = beta-D-fructose 6-phosphate + NADH + H(+). This Mycoplasma pneumoniae (strain ATCC 29342 / M129 / Subtype 1) (Mycoplasmoides pneumoniae) protein is Mannitol-1-phosphate 5-dehydrogenase (mtlD).